Here is a 554-residue protein sequence, read N- to C-terminus: Formate--tetrahydrofolate ligase (554 aa).

67-74 (TPTGEGKT) is an ATP binding site.

This sequence belongs to the formate--tetrahydrofolate ligase family.

It carries out the reaction (6S)-5,6,7,8-tetrahydrofolate + formate + ATP = (6R)-10-formyltetrahydrofolate + ADP + phosphate. It participates in one-carbon metabolism; tetrahydrofolate interconversion. The protein is Formate--tetrahydrofolate ligase of Finegoldia magna (strain ATCC 29328 / DSM 20472 / WAL 2508) (Peptostreptococcus magnus).